The primary structure comprises 547 residues: MVRLNHAASYFMPIFCSTRPHIVILSALFSISLFSLFYASSELLLHQYDDPLMFKPNSQDYFRTFLLGLFSPFLYYFLKTFLFNINQRFLILNLIVDFPINDVFMLLILIGLAYPQVQDHEGGTIKHKECSWHIIPRQAYIFGISWALGEFTICIIGNLFNYQEIADPNINSGFTHQESANTYCNNNDMSHNDDCGCSTEYRPNVVDRSDITLSKCIEVRNDSSSISNNVYSSEYHPIKPLRSSSSTYGSIRQQPHENKKQLHVPDNSQDDTIIMMNPIDNSLKLTTLDTGDLSFPIDEEQPILKKSFGYTWAVPNENTQNTTKSFTPIKRFIAFSTAYQLVTGLLLMILVVGSNIMLTIGESLILSMYFVYVRGHEGLFTPVVNYFGSRTISNFILCVIIPFISLNFLINTSIYLRRELDDWFNNSQGEFEDDDENTISKRVATNQEYQHPLSANYISMDSPDVINSSPGHFGMNSGQLLGNTTLYYGSLNGDDDDMTNDSALLRFCKKLVKNWRALARNDSFVLGVMVSWSLLVFVTGILSTVYI.

Residues 1 to 19 lie on the Cytoplasmic side of the membrane; it reads MVRLNHAASYFMPIFCSTR. A helical membrane pass occupies residues 20 to 40; it reads PHIVILSALFSISLFSLFYAS. At 41 to 64 the chain is on the vacuolar side; it reads SELLLHQYDDPLMFKPNSQDYFRT. The chain crosses the membrane as a helical span at residues 65 to 85; that stretch reads FLLGLFSPFLYYFLKTFLFNI. Residues 86–89 are Cytoplasmic-facing; the sequence is NQRF. A helical membrane pass occupies residues 90–110; the sequence is LILNLIVDFPINDVFMLLILI. Topologically, residues 111-139 are vacuolar; the sequence is GLAYPQVQDHEGGTIKHKECSWHIIPRQA. A helical membrane pass occupies residues 140–160; the sequence is YIFGISWALGEFTICIIGNLF. Over 161–340 the chain is Cytoplasmic; that stretch reads NYQEIADPNI…RFIAFSTAYQ (180 aa). Ser225 carries the phosphoserine modification. Residues 237–271 are disordered; that stretch reads PIKPLRSSSSTYGSIRQQPHENKKQLHVPDNSQDD. Over residues 242 to 253 the composition is skewed to polar residues; that stretch reads RSSSSTYGSIRQ. The helical transmembrane segment at 341-361 threads the bilayer; sequence LVTGLLLMILVVGSNIMLTIG. Residues 362-394 are Vacuolar-facing; it reads ESLILSMYFVYVRGHEGLFTPVVNYFGSRTISN. Residues 395-415 traverse the membrane as a helical segment; the sequence is FILCVIIPFISLNFLINTSIY. Residues 416 to 523 lie on the Cytoplasmic side of the membrane; sequence LRRELDDWFN…NWRALARNDS (108 aa). Residues 524–544 form a helical membrane-spanning segment; the sequence is FVLGVMVSWSLLVFVTGILST. The Vacuolar portion of the chain corresponds to 545-547; the sequence is VYI.

The protein resides in the vacuole membrane. This is an uncharacterized protein from Saccharomyces cerevisiae (strain ATCC 204508 / S288c) (Baker's yeast).